Consider the following 306-residue polypeptide: tRNA-cytidine(32) 2-sulfurtransferase (306 aa).

Residues 1 to 25 are disordered; it reads MSAVISLPDPQPRAARDPRVAEREQ. Basic and acidic residues predominate over residues 14–25; it reads AARDPRVAEREQ. A PP-loop motif motif is present at residues 57 to 62; the sequence is SGGKDS. The [4Fe-4S] cluster site is built by Cys-132, Cys-135, and Cys-223. The segment at 286-306 is disordered; sequence AHAWLAGSPADADADPETPTV. Positions 297 to 306 are enriched in acidic residues; sequence ADADPETPTV.

Belongs to the TtcA family. Homodimer. It depends on Mg(2+) as a cofactor. [4Fe-4S] cluster is required as a cofactor.

The protein resides in the cytoplasm. It carries out the reaction cytidine(32) in tRNA + S-sulfanyl-L-cysteinyl-[cysteine desulfurase] + AH2 + ATP = 2-thiocytidine(32) in tRNA + L-cysteinyl-[cysteine desulfurase] + A + AMP + diphosphate + H(+). Its pathway is tRNA modification. Its function is as follows. Catalyzes the ATP-dependent 2-thiolation of cytidine in position 32 of tRNA, to form 2-thiocytidine (s(2)C32). The sulfur atoms are provided by the cysteine/cysteine desulfurase (IscS) system. The sequence is that of tRNA-cytidine(32) 2-sulfurtransferase from Stenotrophomonas maltophilia (strain K279a).